The primary structure comprises 348 residues: Putative methylthioribose-1-phosphate isomerase (348 aa).

Residues 55-57 (RGA), arginine 98, and glutamine 203 contribute to the substrate site. The Proton donor role is filled by aspartate 244. Substrate is bound at residue 253–254 (NK).

This sequence belongs to the eIF-2B alpha/beta/delta subunits family. MtnA subfamily.

The enzyme catalyses 5-(methylsulfanyl)-alpha-D-ribose 1-phosphate = 5-(methylsulfanyl)-D-ribulose 1-phosphate. In terms of biological role, catalyzes the interconversion of methylthioribose-1-phosphate (MTR-1-P) into methylthioribulose-1-phosphate (MTRu-1-P). The polypeptide is Putative methylthioribose-1-phosphate isomerase (Methanosarcina acetivorans (strain ATCC 35395 / DSM 2834 / JCM 12185 / C2A)).